Consider the following 202-residue polypeptide: Transmembrane 4 L6 family member 1 (202 aa).

The Cytoplasmic portion of the chain corresponds to 1–9; the sequence is MCYVKCARY. The helical transmembrane segment at 10–30 threads the bilayer; that stretch reads IGYSLVWAAVFCIVANALLYF. Over 31 to 49 the chain is Extracellular; sequence PNGETKYATEDHLSRFVWY. Residues 50–70 form a helical membrane-spanning segment; it reads FAGIVGGGLLMLLPAFVFIGM. Residues 71–93 are Cytoplasmic-facing; the sequence is DEEDCCGCCGYENYGKRCSMLSS. The helical transmembrane segment at 94 to 114 threads the bilayer; sequence VLAALIGIVGSAYCVIVASLG. Over 115–161 the chain is Extracellular; it reads LAEGPKCSDAHGVWNYTFASTEGQYLLNSSMWSKCYEPKHIVEWHVT. N-linked (GlcNAc...) asparagine glycans are attached at residues N129 and N142. A helical membrane pass occupies residues 162–182; sequence LFSILLAFAAVEFILCLIQVI. Topologically, residues 183–202 are cytoplasmic; that stretch reads NGMLGGLCGYCCSRQQQYNC.

The protein belongs to the L6 tetraspanin family. As to quaternary structure, present in high molecular weight complexes in tumor cells. Interacts with SDCBP2. In terms of tissue distribution, highly expressed in skin and lung. Moderately expressed in lymph nodes and kidneys. Also present in thymic stroma and fibroblasts.

Its subcellular location is the membrane. This Mus musculus (Mouse) protein is Transmembrane 4 L6 family member 1 (Tm4sf1).